Here is a 234-residue protein sequence, read N- to C-terminus: Two-component response regulator ARR9 (234 aa).

The 138-residue stretch at 10 to 147 (HVLAVDDSLF…DLNKLKPHMM (138 aa)) folds into the Response regulatory domain. Position 80 is a 4-aspartylphosphate (D80).

Belongs to the ARR family. Type-A subfamily. As to quaternary structure, interacts with AHP1 and AHP3. Post-translationally, two-component system major event consists of a His-to-Asp phosphorelay between a sensor histidine kinase (HK) and a response regulator (RR). In plants, the His-to-Asp phosphorelay involves an additional intermediate named Histidine-containing phosphotransfer protein (HPt). This multistep phosphorelay consists of a His-Asp-His-Asp sequential transfer of a phosphate group between first a His and an Asp of the HK protein, followed by the transfer to a conserved His of the HPt protein and finally the transfer to an Asp in the receiver domain of the RR protein. Predominantly expressed in roots.

Its subcellular location is the nucleus. In terms of biological role, functions as a response regulator involved in His-to-Asp phosphorelay signal transduction system. Phosphorylation of the Asp residue in the receiver domain activates the ability of the protein to promote the transcription of target genes. Type-A response regulators seem to act as negative regulators of the cytokinin signaling. In Arabidopsis thaliana (Mouse-ear cress), this protein is Two-component response regulator ARR9 (ARR9).